The following is a 207-amino-acid chain: Ras-related protein Rab-7a (207 aa).

Thr2 bears the N-acetylthreonine mark. Ser17, Gly18, Val19, Gly20, Lys21, Thr22, Ser23, Ser34, Asn35, Tyr37, and Thr40 together coordinate GTP. Residue Thr22 participates in Mg(2+) binding. Positions Tyr28–Ile41 match the Switch 1 motif. Mg(2+)-binding residues include Thr40 and Asp63. Residue Gly66 coordinates GTP. A Switch 2 motif is present at residues Gln67–Asp82. Ser72 bears the Phosphoserine mark. Residues Asn125, Lys126, Asp128, Ala156, and Lys157 each coordinate GTP. Glycyl lysine isopeptide (Lys-Gly) (interchain with G-Cter in ubiquitin) cross-links involve residues Lys191 and Lys194. 2 S-geranylgeranyl cysteine lipidation sites follow: Cys205 and Cys207. Position 207 is a cysteine methyl ester (Cys207).

The protein belongs to the small GTPase superfamily. Rab family. Interacts with NTRK1/TRKA. Interacts with RILP. Interacts with PSMA7. Interacts with RNF115. Interacts with FYCO1. Interacts with the PIK3C3/VPS34-PIK3R4 complex. The GTP-bound form interacts with OSBPL1A. The GTP-bound form interacts with RAC1. Interacts with CLN3. Interacts with CHM, the substrate-binding subunit of the Rab geranylgeranyltransferase complex. Interacts with C9orf72. Does not interact with HPS4 and the BLOC-3 complex (heterodimer of HPS1 and HPS4). Interacts with CLN5. Interacts with PLEKHM1 (via N- and C-terminus). Interacts with PRPH; the interaction is direct. Interacts with VPS13A. The GDP-bound form interacts with RIMOC1. Interacts with the MON1A-CCZ1B complex and this interaction is enhanced in the presence of RIMOC1. Interacts with VPS39 and VPS41. Forms a ternary complex with LAMP2 and RUFY4; the interaction with LAMP2 is mediated by RUFY4 (via RUN and coiled coil domains). It depends on Mg(2+) as a cofactor. In terms of processing, deubiquitination at Lys-191 and Lys-194 by USP32. Post-translationally, phosphorylated at Ser-72 by LRRK1; phosphorylation is dependent on protein kinase C (PKC) activation of LRRK1. Prenylated. Prenylation is required for association with cellular membranes.

It localises to the cytoplasmic vesicle. It is found in the phagosome membrane. The protein resides in the late endosome membrane. The protein localises to the lysosome membrane. Its subcellular location is the melanosome membrane. It localises to the autophagosome membrane. It is found in the lipid droplet. The protein resides in the endosome membrane. The protein localises to the mitochondrion membrane. It carries out the reaction GTP + H2O = GDP + phosphate + H(+). Its activity is regulated as follows. Regulated by guanine nucleotide exchange factors (GEFs) which promote the exchange of bound GDP for free GTP. Regulated by GTPase activating proteins (GAPs) which increase the GTP hydrolysis activity. Inhibited by GDP dissociation inhibitors (GDIs). In terms of biological role, the small GTPases Rab are key regulators of intracellular membrane trafficking, from the formation of transport vesicles to their fusion with membranes. Rabs cycle between an inactive GDP-bound form and an active GTP-bound form that is able to recruit to membranes different sets of downstream effectors directly responsible for vesicle formation, movement, tethering and fusion. In its active state, RAB7A binds to a variety of effector proteins playing a key role in the regulation of endo-lysosomal trafficking. Governs early-to-late endosomal maturation, microtubule minus-end as well as plus-end directed endosomal migration and positioning, and endosome-lysosome transport through different protein-protein interaction cascades. Also plays a central role in growth-factor-mediated cell signaling, nutrient-transporter-mediated nutrient uptake, neurotrophin transport in the axons of neurons and lipid metabolism. Also involved in regulation of some specialized endosomal membrane trafficking, such as maturation of melanosomes, pathogen-induced phagosomes (or vacuoles) and autophagosomes. Plays a role in the maturation and acidification of phagosomes that engulf pathogens, such as S.aureus and Mycobacteria. Plays a role in the fusion of phagosomes with lysosomes. In concert with RAC1, plays a role in regulating the formation of RBs (ruffled borders) in osteoclasts. Controls the endosomal trafficking and neurite outgrowth signaling of NTRK1/TRKA. Regulates the endocytic trafficking of the EGF-EGFR complex by regulating its lysosomal degradation. Involved in the ADRB2-stimulated lipolysis through lipophagy, a cytosolic lipase-independent autophagic pathway. Required for the exosomal release of SDCBP, CD63 and syndecan. Required for vesicular trafficking and cell surface expression of ACE2. May play a role in PRPH neuronal intermediate filament assembly. In Oryctolagus cuniculus (Rabbit), this protein is Ras-related protein Rab-7a (RAB7A).